A 90-amino-acid polypeptide reads, in one-letter code: Small ribosomal subunit protein bS20 (90 aa).

It belongs to the bacterial ribosomal protein bS20 family.

In terms of biological role, binds directly to 16S ribosomal RNA. The sequence is that of Small ribosomal subunit protein bS20 from Rickettsia canadensis (strain McKiel).